The primary structure comprises 1399 residues: DNA-directed RNA polymerase subunit beta' (1399 aa).

The Zn(2+) site is built by C71, C73, C86, and C89. 3 residues coordinate Mg(2+): D462, D464, and D466. Zn(2+)-binding residues include C810, C884, C891, and C894. The segment at 1376 to 1399 (EREKQAAITPAAPEAEPLALPPAE) is disordered.

This sequence belongs to the RNA polymerase beta' chain family. As to quaternary structure, the RNAP catalytic core consists of 2 alpha, 1 beta, 1 beta' and 1 omega subunit. When a sigma factor is associated with the core the holoenzyme is formed, which can initiate transcription. The cofactor is Mg(2+). Requires Zn(2+) as cofactor.

It carries out the reaction RNA(n) + a ribonucleoside 5'-triphosphate = RNA(n+1) + diphosphate. In terms of biological role, DNA-dependent RNA polymerase catalyzes the transcription of DNA into RNA using the four ribonucleoside triphosphates as substrates. The sequence is that of DNA-directed RNA polymerase subunit beta' from Afipia carboxidovorans (strain ATCC 49405 / DSM 1227 / KCTC 32145 / OM5) (Oligotropha carboxidovorans).